Here is an 85-residue protein sequence, read N- to C-terminus: Cell division topological specificity factor (85 aa).

This sequence belongs to the MinE family.

In terms of biological role, prevents the cell division inhibition by proteins MinC and MinD at internal division sites while permitting inhibition at polar sites. This ensures cell division at the proper site by restricting the formation of a division septum at the midpoint of the long axis of the cell. The protein is Cell division topological specificity factor of Xylella fastidiosa (strain M12).